The sequence spans 196 residues: Elongation factor Ts (196 aa).

The segment at Thr-80 to Val-83 is involved in Mg(2+) ion dislocation from EF-Tu.

This sequence belongs to the EF-Ts family. As to quaternary structure, heterotetramer composed of two EF-Ts.EF-Tu dimer complexes.

The protein resides in the cytoplasm. In terms of biological role, associates with the EF-Tu.GDP complex and induces the exchange of GDP to GTP. It remains bound to the aminoacyl-tRNA.EF-Tu.GTP complex up to the GTP hydrolysis stage on the ribosome. This chain is Elongation factor Ts (tsf), found in Thermus thermophilus (strain ATCC 27634 / DSM 579 / HB8).